Here is a 692-residue protein sequence, read N- to C-terminus: Elongation factor G (692 aa).

Residues 8 to 283 form the tr-type G domain; that stretch reads QDLRNIGIVA…AVVDYLPSPL (276 aa). Residues 17-24, 81-85, and 135-138 each bind GTP; these read AHIDAGKT, DTPGH, and NKLD.

This sequence belongs to the TRAFAC class translation factor GTPase superfamily. Classic translation factor GTPase family. EF-G/EF-2 subfamily.

It is found in the cytoplasm. Catalyzes the GTP-dependent ribosomal translocation step during translation elongation. During this step, the ribosome changes from the pre-translocational (PRE) to the post-translocational (POST) state as the newly formed A-site-bound peptidyl-tRNA and P-site-bound deacylated tRNA move to the P and E sites, respectively. Catalyzes the coordinated movement of the two tRNA molecules, the mRNA and conformational changes in the ribosome. The protein is Elongation factor G of Hydrogenobaculum sp. (strain Y04AAS1).